The sequence spans 259 residues: Type III pantothenate kinase (259 aa).

6-13 is an ATP binding site; sequence DAGNTNIV. Substrate-binding positions include tyrosine 100 and 107 to 110; that span reads GADR. Aspartate 109 serves as the catalytic Proton acceptor. A K(+)-binding site is contributed by aspartate 129. ATP is bound at residue threonine 132. Threonine 184 is a binding site for substrate.

It belongs to the type III pantothenate kinase family. As to quaternary structure, homodimer. It depends on NH4(+) as a cofactor. Requires K(+) as cofactor.

The protein resides in the cytoplasm. The enzyme catalyses (R)-pantothenate + ATP = (R)-4'-phosphopantothenate + ADP + H(+). Its pathway is cofactor biosynthesis; coenzyme A biosynthesis; CoA from (R)-pantothenate: step 1/5. In terms of biological role, catalyzes the phosphorylation of pantothenate (Pan), the first step in CoA biosynthesis. The protein is Type III pantothenate kinase of Clostridium novyi (strain NT).